The following is an 88-amino-acid chain: Small ribosomal subunit protein uS15 (88 aa).

This sequence belongs to the universal ribosomal protein uS15 family. As to quaternary structure, part of the 30S ribosomal subunit. Forms a bridge to the 50S subunit in the 70S ribosome, contacting the 23S rRNA.

One of the primary rRNA binding proteins, it binds directly to 16S rRNA where it helps nucleate assembly of the platform of the 30S subunit by binding and bridging several RNA helices of the 16S rRNA. Functionally, forms an intersubunit bridge (bridge B4) with the 23S rRNA of the 50S subunit in the ribosome. This is Small ribosomal subunit protein uS15 from Psychrobacter arcticus (strain DSM 17307 / VKM B-2377 / 273-4).